A 701-amino-acid polypeptide reads, in one-letter code: MARTTPIGRYRNIGIVAHVDAGKTTTTERVLFYTGKSHKMGEVHDGAATTDWMVQEQERGITITSAAITAFWQGSEKQHKDQFRFNVIDTPGHVDFTIEVERSLRVLDGAVVVFCGTSGVEPQSETVWRQANKYGVPRIVYVNKMDRAGANFLRVIAQIKQRLGHTPVPIQLAIGAEDNFQGQIDLMSMEAVYWNDADKGMVPVRKPIPAELQELADEWRSNMVEAAAEASEELMNKYVDGEELTNDEIKAALRQRTIAGEIVLAVCGSSFKNKGVPLVLDAVIDYLPAPTDIPAIKGSDPDNEEKLMERHADDNEPFSALAFKIATDPFVGTLTFVRVYSGVLASGDGVINSVKGKKERVGRMVQMHANAREEIKEVRAGDIAALIGMKDVTTGETLCNADKPIILVRMDFPEPVISVAVEPKTKDDQEKMGIALGKLAQEDPSFRVKTDEETGQTIISGMGELHLDILVDRMRREFNVEANIGKPQVSYRERITKNCEIEGKFVRQSGGRGQFGHCWIRFAPADEGQEGLQFVNEVVGGVVPKEYIPAIQKGIEEQMKNGVVAGYPLIGLKATVFDGSYHDVDSNEMAFKVAASMATKQLAQKGGGELLEPIMAVEVVTPEDYMGDVMGDLNRRRGMILGMEDTVSGKVIRAEVPLGEMFGYATDVRSMSQGRASYSMEFKKYNTAPSHIVETVTKKQG.

The region spanning 8–291 (GRYRNIGIVA…AVIDYLPAPT (284 aa)) is the tr-type G domain. Residues 17–24 (AHVDAGKT), 89–93 (DTPGH), and 143–146 (NKMD) each bind GTP.

This sequence belongs to the TRAFAC class translation factor GTPase superfamily. Classic translation factor GTPase family. EF-G/EF-2 subfamily.

The protein localises to the cytoplasm. Its function is as follows. Catalyzes the GTP-dependent ribosomal translocation step during translation elongation. During this step, the ribosome changes from the pre-translocational (PRE) to the post-translocational (POST) state as the newly formed A-site-bound peptidyl-tRNA and P-site-bound deacylated tRNA move to the P and E sites, respectively. Catalyzes the coordinated movement of the two tRNA molecules, the mRNA and conformational changes in the ribosome. The chain is Elongation factor G from Pseudomonas syringae pv. syringae (strain B728a).